Here is a 111-residue protein sequence, read N- to C-terminus: Distal membrane-arm assembly complex protein 1 (111 aa).

The segment covering 1 to 11 (MGSSFSGSTEF) has biased composition (polar residues). The tract at residues 1 to 40 (MGSSFSGSTEFSAPAPPTVSTAVPANPPAKSAVPASPARD) is disordered. Low complexity predominate over residues 18–38 (TVSTAVPANPPAKSAVPASPA). Transmembrane regions (helical) follow at residues 51 to 68 (VLSG…YLVA) and 81 to 101 (GTVL…VVLV).

In terms of assembly, interacts with incompletely assembled mitochondrial NADH:ubiquinone oxidoreductase complex (complex I).

It localises to the mitochondrion inner membrane. Its function is as follows. Required for the assembly of the mitochondrial NADH:ubiquinone oxidoreductase complex (complex I). Involved in the assembly of the distal region of complex I. The polypeptide is Distal membrane-arm assembly complex protein 1 (Mus musculus (Mouse)).